A 204-amino-acid chain; its full sequence is Ribosomal RNA small subunit methyltransferase G (204 aa).

Residues glycine 73, phenylalanine 78, and arginine 139 each contribute to the S-adenosyl-L-methionine site.

This sequence belongs to the methyltransferase superfamily. RNA methyltransferase RsmG family.

It is found in the cytoplasm. The enzyme catalyses guanosine(527) in 16S rRNA + S-adenosyl-L-methionine = N(7)-methylguanosine(527) in 16S rRNA + S-adenosyl-L-homocysteine. In terms of biological role, specifically methylates the N7 position of guanine in position 527 of 16S rRNA. The polypeptide is Ribosomal RNA small subunit methyltransferase G (Coxiella burnetii (strain RSA 331 / Henzerling II)).